The primary structure comprises 391 residues: 1-acyl-sn-glycerol-3-phosphate acyltransferase 2 (391 aa).

A helical transmembrane segment spans residues 3–23; it reads MAAAAVIVPLGILFFISGLVV. The HXXXXD motif signature appears at 92–97; it reads HRSDID. A run of 2 helical transmembrane segments spans residues 306–326 and 334–354; these read LAVV…FLHW and KGIA…QILI. The segment at 358–391 is disordered; it reads QSERSTPAKVAPAKPKDKHQSGSSSQTEVEEKQK.

This sequence belongs to the 1-acyl-sn-glycerol-3-phosphate acyltransferase family.

The protein resides in the endoplasmic reticulum membrane. It carries out the reaction a 1-acyl-sn-glycero-3-phosphate + an acyl-CoA = a 1,2-diacyl-sn-glycero-3-phosphate + CoA. It functions in the pathway phospholipid metabolism; CDP-diacylglycerol biosynthesis; CDP-diacylglycerol from sn-glycerol 3-phosphate: step 2/3. Converts lysophosphatidic acid (LPA) into phosphatidic acid by incorporating acyl moiety at the 2 position. This Brassica oleracea (Wild cabbage) protein is 1-acyl-sn-glycerol-3-phosphate acyltransferase 2 (LPAT2).